The chain runs to 264 residues: [LysW]-aminoadipate/[LysW]-glutamate kinase (264 aa).

Substrate is bound by residues 35 to 36 (GG), Arg-62, and Asn-167.

Belongs to the acetylglutamate kinase family. LysZ subfamily.

It is found in the cytoplasm. The catalysed reaction is [amino-group carrier protein]-C-terminal-N-(1,4-dicarboxybutan-1-yl)-L-glutamine + ATP = [amino-group carrier protein]-C-terminal-N-(1-carboxy-5-phosphooxy-5-oxopentan-1-yl)-L-glutamine + ADP. The enzyme catalyses [amino-group carrier protein]-C-terminal-gamma-(L-glutamyl)-L-glutamate + ATP = [amino-group carrier protein]-C-terminal-gamma-(5-phospho-L-glutamyl)-L-glutamate + ADP. It participates in amino-acid biosynthesis; L-lysine biosynthesis via AAA pathway; L-lysine from L-alpha-aminoadipate (Thermus route): step 2/5. Its pathway is amino-acid biosynthesis; L-arginine biosynthesis. Involved in both the arginine and lysine biosynthetic pathways. Phosphorylates the LysW-bound precursors glutamate (for arginine biosynthesis), respectively alpha-aminoadipate (for lysine biosynthesis). The protein is [LysW]-aminoadipate/[LysW]-glutamate kinase of Saccharolobus solfataricus (strain ATCC 35092 / DSM 1617 / JCM 11322 / P2) (Sulfolobus solfataricus).